A 391-amino-acid chain; its full sequence is RAB6A-GEF complex partner protein 2 (391 aa).

This sequence belongs to the RGP1 family. As to quaternary structure, forms a complex with RIC1; the interaction enhances RAB6A GTPase activity. Interacts with RIC1. Interacts with RAB6A; the interaction is direct with a preference for RAB6A-GDP. Interacts with RAB33B.

It localises to the cytoplasm. The protein localises to the cytosol. Its subcellular location is the membrane. Its function is as follows. The RIC1-RGP1 complex acts as a guanine nucleotide exchange factor (GEF), which activates RAB6A by exchanging bound GDP for free GTP and may thereby required for efficient fusion of endosome-derived vesicles with the Golgi compartment. The RIC1-RGP1 complex participates in the recycling of mannose-6-phosphate receptors. This chain is RAB6A-GEF complex partner protein 2, found in Homo sapiens (Human).